The sequence spans 1503 residues: E3 ubiquitin-protein ligase listerin (1503 aa).

14 HEAT repeats span residues 52–89 (SGIDDETRIVMRKLTKKDCQTREKGLRELTNIIAETSS), 93–129 (CYEHFCGLVPQLSTDGSPTVRLLTMKTITLFLVKLEK), 133–170 (KGLKKIIPMVLFARCDVTNGVAAAAGAVIRDGFEADKK), 280–318 (LNTPSIVTYIQNHLDSQTFTPECSTAWEGMIILLPSAQF), 323–345 (SLQNGIYPRFLNVIRKKGNHWRV), 346–384 (LQHFLLPAVVLLLKEMGSLENNMKVLGTIMESFTDNLPW), 552–589 (GDIVRLIKLLLENQEIKSLNISVKNDHVGRRLLLTGGS), 640–663 (AENVEFLITLLRKMKSTDVSNEAE), 664–700 (KNVLILKLFTAIFESDEDAKSEHYNCLSEHLTSDFNS), 845–882 (LEKRYSLVALTEELQRSRREIEERLIRSDEVRFKLDDS), 1022–1065 (TLFI…RMFR), 1078–1117 (RTLLKAMFTLVEFPTNVPNDSVVTREFVPELSVFKYSLLE), 1141–1183 (AAAK…VMIS), and 1302–1340 (FKSITLLPAAVRLFHKNIPNNFKPIFQEVVTKHASKLLI). An RING-type zinc finger spans residues 1446–1499 (CTICMMTVHQQTNQLPKVKCKQCKNRFHSNCLVSSFHTYKWFESSNQSTCPLCR).

Belongs to the LTN1 family. In terms of assembly, component of the ribosome quality control complex (RQC), composed of at least the E3 ubiquitin ligase ltn1 and nemf. The complex probably also contains tcf25 as well as vcp/p97 and its ubiquitin-binding cofactors. RQC forms a stable complex with 60S ribosomal subunits.

It is found in the cytoplasm. It localises to the cytosol. The enzyme catalyses S-ubiquitinyl-[E2 ubiquitin-conjugating enzyme]-L-cysteine + [acceptor protein]-L-lysine = [E2 ubiquitin-conjugating enzyme]-L-cysteine + N(6)-ubiquitinyl-[acceptor protein]-L-lysine.. It functions in the pathway protein modification; protein ubiquitination. Its function is as follows. E3 ubiquitin-protein ligase. Component of the ribosome quality control complex (RQC), a ribosome-associated complex that mediates ubiquitination and extraction of incompletely synthesized nascent chains for proteasomal degradation. Ubiquitination leads to vcp/p97 recruitment for extraction and degradation of the incomplete translation product. This is E3 ubiquitin-protein ligase listerin from Caenorhabditis briggsae.